Here is a 178-residue protein sequence, read N- to C-terminus: Aspartate carbamoyltransferase regulatory chain (178 aa).

Residues 1-15 (MNDREPNQKESKESV) show a composition bias toward basic and acidic residues. The disordered stretch occupies residues 1-23 (MNDREPNQKESKESVNDAVPRAR). C133, C138, C159, and C162 together coordinate Zn(2+).

The protein belongs to the PyrI family. Contains catalytic and regulatory chains. Requires Zn(2+) as cofactor.

Functionally, involved in allosteric regulation of aspartate carbamoyltransferase. This Haloquadratum walsbyi (strain DSM 16790 / HBSQ001) protein is Aspartate carbamoyltransferase regulatory chain.